Reading from the N-terminus, the 687-residue chain is Ataxin-1-like (687 aa).

Basic and acidic residues predominate over residues 1–19 (MKPVHERSQECLPPKKRDL). Disordered regions lie at residues 1–46 (MKPV…SEWS), 185–223 (ATPP…LDLA), and 261–294 (SALE…KGES). Positions 20-197 (PVTSEDMGRT…PPQAASPAQS (178 aa)) are interaction with NCOR2 and ATXN1. The interval 20-197 (PVTSEDMGRT…PPQAASPAQS (178 aa)) is self-association. Composition is skewed to polar residues over residues 28–43 (RTTS…SDAS) and 198–219 (FNKS…NTQP). Residues 272 to 283 (RQRERNVRRESE) are compositionally biased toward basic and acidic residues. Residue Ser-282 is modified to Phosphoserine. Position 328 is a phosphothreonine (Thr-328). Residues 356–379 (DEPSPLNLSHHNLDHQGEGRGSAR) are disordered. At Ser-359 the chain carries Phosphoserine. An AXH domain is found at 455-586 (PPPVTSSHLP…SISLQSLNSN (132 aa)). Residues 587–649 (SVSQASCAPP…PGAQACWPAP (63 aa)) are disordered.

This sequence belongs to the ATXN1 family. Homodimer. Interacts (via AXH domain) with NCOR2. Interacts with ATXN1 and CIC. Directly interacts with RBPJ; this interaction is disrupted in the presence of Notch intracellular domain. Competes with ATXN1 for RBPJ-binding. Found in a complex with CIC and ATXN1. Expressed in the cortex and hypothalamus (at protein level). Expressed in neuronal cells. Highly expressed in Purkinje cells of cerebellum.

The protein resides in the nucleus. It is found in the cell projection. The protein localises to the dendrite. Functionally, chromatin-binding factor that repress Notch signaling in the absence of Notch intracellular domain by acting as a CBF1 corepressor. Binds to the HEY promoter and might assist, along with NCOR2, RBPJ-mediated repression. Can suppress the cytotoxicity of ATXN1 in spinocerebellar ataxia type 1 (SCA1). In concert with CIC and ATXN1, involved in brain development. The chain is Ataxin-1-like (Atxn1l) from Mus musculus (Mouse).